Here is a 695-residue protein sequence, read N- to C-terminus: Elongation factor G 1 (695 aa).

In terms of domain architecture, tr-type G spans 5–280 (ARYRNIGIFA…AVVDYLPSPT (276 aa)). GTP is bound by residues 14-21 (AHVDAGKT), 78-82 (DTPGH), and 132-135 (NKLD).

The protein belongs to the TRAFAC class translation factor GTPase superfamily. Classic translation factor GTPase family. EF-G/EF-2 subfamily.

It localises to the cytoplasm. Its function is as follows. Catalyzes the GTP-dependent ribosomal translocation step during translation elongation. During this step, the ribosome changes from the pre-translocational (PRE) to the post-translocational (POST) state as the newly formed A-site-bound peptidyl-tRNA and P-site-bound deacylated tRNA move to the P and E sites, respectively. Catalyzes the coordinated movement of the two tRNA molecules, the mRNA and conformational changes in the ribosome. The chain is Elongation factor G 1 from Pseudoalteromonas atlantica (strain T6c / ATCC BAA-1087).